The chain runs to 259 residues: 2,3-dihydroxy-2,3-dihydro-p-cumate dehydrogenase (259 aa).

18–42 (VTGGAHGIGLGIVERLLGLGARVTA) lines the NAD(+) pocket. The active-site Proton acceptor is the Y163.

This sequence belongs to the short-chain dehydrogenases/reductases (SDR) family.

The enzyme catalyses (2R,3S)-2,3-dihydroxy-2,3-dihydro-p-cumate + NAD(+) = 2,3-dihydroxy-p-cumate + NADH + H(+). Its pathway is aromatic compound metabolism; p-cumate degradation; acetaldehyde and pyruvate from p-cumate: step 2/7. The chain is 2,3-dihydroxy-2,3-dihydro-p-cumate dehydrogenase (cmtB) from Pseudomonas putida (strain ATCC 700007 / DSM 6899 / JCM 31910 / BCRC 17059 / LMG 24140 / F1).